The primary structure comprises 338 residues: 5-dehydro-2-deoxygluconokinase (338 aa).

This sequence belongs to the carbohydrate kinase PfkB family.

It catalyses the reaction 5-dehydro-2-deoxy-D-gluconate + ATP = 6-phospho-5-dehydro-2-deoxy-D-gluconate + ADP + H(+). Its pathway is polyol metabolism; myo-inositol degradation into acetyl-CoA; acetyl-CoA from myo-inositol: step 5/7. Catalyzes the phosphorylation of 5-dehydro-2-deoxy-D-gluconate (2-deoxy-5-keto-D-gluconate or DKG) to 6-phospho-5-dehydro-2-deoxy-D-gluconate (DKGP). This Mesomycoplasma hyopneumoniae (strain 232) (Mycoplasma hyopneumoniae) protein is 5-dehydro-2-deoxygluconokinase.